The primary structure comprises 73 residues: Guanine nucleotide-binding protein G(I)/G(S)/G(O) subunit gamma-11 (73 aa).

A disordered region spans residues Val-54 to Ser-73. A Cysteine methyl ester modification is found at Cys-70. Cys-70 carries S-farnesyl cysteine lipidation. A propeptide spans Ile-71 to Ser-73 (removed in mature form).

It belongs to the G protein gamma family. G proteins are composed of 3 units, alpha, beta and gamma. Interacts with beta-1 and beta-3, but not with beta-2.

The protein resides in the cell membrane. Functionally, guanine nucleotide-binding proteins (G proteins) are involved as a modulator or transducer in various transmembrane signaling systems. The beta and gamma chains are required for the GTPase activity, for replacement of GDP by GTP, and for G protein-effector interaction. The sequence is that of Guanine nucleotide-binding protein G(I)/G(S)/G(O) subunit gamma-11 (GNG11) from Bos taurus (Bovine).